Reading from the N-terminus, the 310-residue chain is Aspartate carbamoyltransferase catalytic subunit (310 aa).

Carbamoyl phosphate-binding residues include Arg55 and Thr56. Lys83 contributes to the L-aspartate binding site. Carbamoyl phosphate is bound by residues Arg105, His136, and Gln139. 2 residues coordinate L-aspartate: Arg169 and Arg223. Residues Gly264 and Pro265 each contribute to the carbamoyl phosphate site.

This sequence belongs to the aspartate/ornithine carbamoyltransferase superfamily. ATCase family. As to quaternary structure, heterododecamer (2C3:3R2) of six catalytic PyrB chains organized as two trimers (C3), and six regulatory PyrI chains organized as three dimers (R2).

The enzyme catalyses carbamoyl phosphate + L-aspartate = N-carbamoyl-L-aspartate + phosphate + H(+). Its pathway is pyrimidine metabolism; UMP biosynthesis via de novo pathway; (S)-dihydroorotate from bicarbonate: step 2/3. In terms of biological role, catalyzes the condensation of carbamoyl phosphate and aspartate to form carbamoyl aspartate and inorganic phosphate, the committed step in the de novo pyrimidine nucleotide biosynthesis pathway. The protein is Aspartate carbamoyltransferase catalytic subunit of Saccharopolyspora erythraea (strain ATCC 11635 / DSM 40517 / JCM 4748 / NBRC 13426 / NCIMB 8594 / NRRL 2338).